The primary structure comprises 300 residues: GTPase Era (300 aa).

An Era-type G domain is found at His5–Ala176. Positions Gly13–Ser20 are G1. Gly13 to Ser20 is a binding site for GTP. The interval Gln39–His43 is G2. Residues Asp60–Gly63 are G3. Residues Asp60 to Leu64 and Thr125 to Asp128 contribute to the GTP site. Positions Thr125–Asp128 are G4. A G5 region spans residues Val155 to Ala157. The 80-residue stretch at Val207–Lys286 folds into the KH type-2 domain.

This sequence belongs to the TRAFAC class TrmE-Era-EngA-EngB-Septin-like GTPase superfamily. Era GTPase family. Monomer.

Its subcellular location is the cell envelope. It localises to the secreted. The protein localises to the cell wall. Its function is as follows. Exhibits GTPase activity. Binds RNA but is probably not involved in ribosome assembly in mycobacteria. In Mycobacterium bovis (strain ATCC BAA-935 / AF2122/97), this protein is GTPase Era.